Here is a 156-residue protein sequence, read N- to C-terminus: ATP synthase subunit b (156 aa).

Residues 7–27 form a helical membrane-spanning segment; that stretch reads LIGQTVAFIIFVWFCMKFVWP.

This sequence belongs to the ATPase B chain family. As to quaternary structure, F-type ATPases have 2 components, F(1) - the catalytic core - and F(0) - the membrane proton channel. F(1) has five subunits: alpha(3), beta(3), gamma(1), delta(1), epsilon(1). F(0) has three main subunits: a(1), b(2) and c(10-14). The alpha and beta chains form an alternating ring which encloses part of the gamma chain. F(1) is attached to F(0) by a central stalk formed by the gamma and epsilon chains, while a peripheral stalk is formed by the delta and b chains.

The protein localises to the cell inner membrane. In terms of biological role, f(1)F(0) ATP synthase produces ATP from ADP in the presence of a proton or sodium gradient. F-type ATPases consist of two structural domains, F(1) containing the extramembraneous catalytic core and F(0) containing the membrane proton channel, linked together by a central stalk and a peripheral stalk. During catalysis, ATP synthesis in the catalytic domain of F(1) is coupled via a rotary mechanism of the central stalk subunits to proton translocation. Component of the F(0) channel, it forms part of the peripheral stalk, linking F(1) to F(0). This chain is ATP synthase subunit b, found in Shewanella baltica (strain OS185).